The sequence spans 138 residues: Ribosomal RNA large subunit methyltransferase H (138 aa).

S-adenosyl-L-methionine-binding positions include leucine 57, glycine 86, and 105–110 (LSPLTF).

This sequence belongs to the RNA methyltransferase RlmH family. In terms of assembly, homodimer.

It is found in the cytoplasm. It catalyses the reaction pseudouridine(1915) in 23S rRNA + S-adenosyl-L-methionine = N(3)-methylpseudouridine(1915) in 23S rRNA + S-adenosyl-L-homocysteine + H(+). Specifically methylates the pseudouridine at position 1915 (m3Psi1915) in 23S rRNA. This chain is Ribosomal RNA large subunit methyltransferase H, found in Prochlorococcus marinus (strain MIT 9312).